The primary structure comprises 178 residues: Large ribosomal subunit protein bL25 (178 aa).

The protein belongs to the bacterial ribosomal protein bL25 family. CTC subfamily. In terms of assembly, part of the 50S ribosomal subunit; part of the 5S rRNA/L5/L18/L25 subcomplex. Contacts the 5S rRNA. Binds to the 5S rRNA independently of L5 and L18.

This is one of the proteins that binds to the 5S RNA in the ribosome where it forms part of the central protuberance. This chain is Large ribosomal subunit protein bL25, found in Campylobacter jejuni subsp. jejuni serotype O:6 (strain 81116 / NCTC 11828).